Consider the following 161-residue polypeptide: Cyclic pyranopterin monophosphate synthase (161 aa).

Residues 75 to 77 and 113 to 114 each bind substrate; these read LCH and ME. The active site involves Asp128.

The protein belongs to the MoaC family. Homohexamer; trimer of dimers.

The catalysed reaction is (8S)-3',8-cyclo-7,8-dihydroguanosine 5'-triphosphate = cyclic pyranopterin phosphate + diphosphate. The protein operates within cofactor biosynthesis; molybdopterin biosynthesis. Functionally, catalyzes the conversion of (8S)-3',8-cyclo-7,8-dihydroguanosine 5'-triphosphate to cyclic pyranopterin monophosphate (cPMP). The sequence is that of Cyclic pyranopterin monophosphate synthase from Salmonella typhi.